A 213-amino-acid polypeptide reads, in one-letter code: Orotate phosphoribosyltransferase (213 aa).

Residue lysine 26 coordinates 5-phospho-alpha-D-ribose 1-diphosphate. 34–35 is a binding site for orotate; sequence FF. 5-phospho-alpha-D-ribose 1-diphosphate contacts are provided by residues 72-73, arginine 99, lysine 100, lysine 103, histidine 105, and 124-132; these read YK and DDVITAGTA. Orotate contacts are provided by threonine 128 and arginine 156.

This sequence belongs to the purine/pyrimidine phosphoribosyltransferase family. PyrE subfamily. Homodimer. Mg(2+) serves as cofactor.

It catalyses the reaction orotidine 5'-phosphate + diphosphate = orotate + 5-phospho-alpha-D-ribose 1-diphosphate. It functions in the pathway pyrimidine metabolism; UMP biosynthesis via de novo pathway; UMP from orotate: step 1/2. Functionally, catalyzes the transfer of a ribosyl phosphate group from 5-phosphoribose 1-diphosphate to orotate, leading to the formation of orotidine monophosphate (OMP). The sequence is that of Orotate phosphoribosyltransferase from Haemophilus ducreyi (strain 35000HP / ATCC 700724).